We begin with the raw amino-acid sequence, 162 residues long: NADH-quinone oxidoreductase subunit I (162 aa).

2 4Fe-4S ferredoxin-type domains span residues 54-83 and 93-122; these read RRYENGEERCIACKLCEAVCPAMAITIESE and TRYDIDLTKCIFCGFCEESCPVDSIVETQI. The [4Fe-4S] cluster site is built by Cys-63, Cys-66, Cys-69, Cys-73, Cys-102, Cys-105, Cys-108, and Cys-112.

This sequence belongs to the complex I 23 kDa subunit family. NDH-1 is composed of 14 different subunits. Subunits NuoA, H, J, K, L, M, N constitute the membrane sector of the complex. The cofactor is [4Fe-4S] cluster.

It localises to the cell inner membrane. It carries out the reaction a quinone + NADH + 5 H(+)(in) = a quinol + NAD(+) + 4 H(+)(out). NDH-1 shuttles electrons from NADH, via FMN and iron-sulfur (Fe-S) centers, to quinones in the respiratory chain. The immediate electron acceptor for the enzyme in this species is believed to be ubiquinone. Couples the redox reaction to proton translocation (for every two electrons transferred, four hydrogen ions are translocated across the cytoplasmic membrane), and thus conserves the redox energy in a proton gradient. The polypeptide is NADH-quinone oxidoreductase subunit I (Burkholderia vietnamiensis (strain G4 / LMG 22486) (Burkholderia cepacia (strain R1808))).